A 987-amino-acid chain; its full sequence is Ras guanine nucleotide exchange factor efc25 (987 aa).

Over residues 1–10 (MRRPNLDRLR) the composition is skewed to basic and acidic residues. Disordered regions lie at residues 1–50 (MRRP…STMS), 100–130 (FSSTHSLTRQPSPRSPLTPLKGNTRASPEIR), and 529–552 (NANTAKDDEPARQTNKGTTRISRS). Low complexity predominate over residues 19-39 (TSVSKPSTPSYSTYSLSPTFS). Polar residues-rich tracts occupy residues 40–50 (DKSVLSPSTMS), 102–111 (STHSLTRQPS), and 540–552 (RQTNKGTTRISRS). Phosphoserine is present on serine 552. An N-terminal Ras-GEF domain is found at 590–723 (SDNNVKGGTL…VILSEIDNLW (134 aa)). The 234-residue stretch at 752 to 985 (TPEEFASQMT…FDKSLSLEPR (234 aa)) folds into the Ras-GEF domain.

It is found in the cytoplasm. Functionally, has a role in chromosome segregation and cell morphology upstream of the ras1-scd1 pathway. Promotes the exchange of ras1-bound GDP by GTP leading to its activation. In Schizosaccharomyces pombe (strain 972 / ATCC 24843) (Fission yeast), this protein is Ras guanine nucleotide exchange factor efc25 (efc25).